Consider the following 189-residue polypeptide: Thermostable direct hemolysin 1 (189 aa).

The first 24 residues, M1–A24, serve as a signal peptide directing secretion. Cysteines 175 and 185 form a disulfide.

Belongs to the TDH hemolysin family. Homodimer.

Functionally, bacterial hemolysins are exotoxins that attack blood cell membranes and cause cell rupture by mechanisms not clearly defined. The polypeptide is Thermostable direct hemolysin 1 (tdh1) (Vibrio parahaemolyticus serotype O3:K6 (strain RIMD 2210633)).